Here is a 320-residue protein sequence, read N- to C-terminus: Tyrosine recombinase Synpcc7942_B2651 (320 aa).

One can recognise a Core-binding (CB) domain in the interval 16-106 (VQDWDVLQML…ALKSLVRFSR (91 aa)). A Tyr recombinase domain is found at 127 to 313 (RDTTGTTPER…RQDFQGECTE (187 aa)). Residues arginine 167, lysine 193, histidine 264, arginine 267, and histidine 291 contribute to the active site. The O-(3'-phospho-DNA)-tyrosine intermediate role is filled by tyrosine 300.

Belongs to the 'phage' integrase family.

It localises to the cytoplasm. In terms of biological role, site-specific tyrosine recombinase, which acts by catalyzing the cutting and rejoining of the recombining DNA molecules. In Synechococcus elongatus (strain ATCC 33912 / PCC 7942 / FACHB-805) (Anacystis nidulans R2), this protein is Tyrosine recombinase Synpcc7942_B2651.